The primary structure comprises 323 residues: MKTTFLDFEQPIAELEAKIEELRFVQDDSAVDISEEIERLSKKSQQLTKDLYANLSPWQVSQIARHPQRPYTLDYVAELFTDFHELHGDRAFADDLSIVGGLARFGGHPCMVIGHQKGRDTKERAARNFGMPRPEGYRKAERLMRLAEKFGLPIFTFVDTPGAYPGIGAEERGQSEAIGRNLYVMAELKTPIITTVIGEGGSGGALAIAVADTVMMLQFSTYSVISPEGCASILWKSAAKAPEAAEALGLTAHRLKALGLIDKIINEPLGGAHRDPKGMAALLRRALADSLRQFQGMSIDALRERRFERLMAYGKFKETTPGA.

In terms of domain architecture, CoA carboxyltransferase C-terminal spans 39–293 (RLSKKSQQLT…RRALADSLRQ (255 aa)).

It belongs to the AccA family. As to quaternary structure, acetyl-CoA carboxylase is a heterohexamer composed of biotin carboxyl carrier protein (AccB), biotin carboxylase (AccC) and two subunits each of ACCase subunit alpha (AccA) and ACCase subunit beta (AccD).

The protein resides in the cytoplasm. It carries out the reaction N(6)-carboxybiotinyl-L-lysyl-[protein] + acetyl-CoA = N(6)-biotinyl-L-lysyl-[protein] + malonyl-CoA. Its pathway is lipid metabolism; malonyl-CoA biosynthesis; malonyl-CoA from acetyl-CoA: step 1/1. Component of the acetyl coenzyme A carboxylase (ACC) complex. First, biotin carboxylase catalyzes the carboxylation of biotin on its carrier protein (BCCP) and then the CO(2) group is transferred by the carboxyltransferase to acetyl-CoA to form malonyl-CoA. This is Acetyl-coenzyme A carboxylase carboxyl transferase subunit alpha from Burkholderia orbicola (strain AU 1054).